We begin with the raw amino-acid sequence, 256 residues long: Nuclear shuttle protein (256 aa).

The short motif at 21–42 is the Bipartite nuclear localization signal element; it reads NSLIRQQSLFKRNVSKRRPFQT. A Nuclear localization signal motif is present at residues 81–96; the sequence is DIAKSLPNRTRSYIKL. The segment at 150 to 187 is interaction with Arabidopsis thaliana NSI protein; that stretch reads ELFGARIHSHGNLAIVPSLKDRFYIRHVLKRVISVEKD.

The protein belongs to the begomovirus nuclear shuttle protein family. In terms of assembly, binds to single-stranded and double-stranded viral DNA. Interacts with the host nuclear shuttle interacting (NSI) protein. This interaction may allow NSP to recruit NSI monomers to the viral genome and thus regulate nuclear export of viral genome by NSP.

The protein localises to the host nucleus. It is found in the host cytoplasm. The protein resides in the host cell membrane. In terms of biological role, binds to the genomic viral ssDNA, shuttles it into and out of the cell nucleus. Begomoviruses use 2 proteins to transport their DNA from cell to cell. The nuclear shuttle protein (NSP) shuttles it between nucleus and cytoplasm and the movement protein (MP) probably transports the DNA-NSP complex to the cell periphery and facilitates movement across the cell wall. This chain is Nuclear shuttle protein, found in Potato yellow mosaic virus (isolate Venezuela) (PYMV).